The following is a 100-amino-acid chain: Small ribosomal subunit protein uS14c (100 aa).

Belongs to the universal ribosomal protein uS14 family. As to quaternary structure, part of the 30S ribosomal subunit.

The protein resides in the plastid. In terms of biological role, binds 16S rRNA, required for the assembly of 30S particles. In Aneura mirabilis (Parasitic liverwort), this protein is Small ribosomal subunit protein uS14c.